A 345-amino-acid polypeptide reads, in one-letter code: MIPSMVWTALGAFLVINAMLLSASLLVFAERRVSAFIQNRPGPNRVGPLGLLQPFADVLKFVLKEDVQPAQSNKFIHSMAPVVMVVIAMTTASLIPFAEGVVVADLNVGVIMLLALTSISVYGVTLAGWSSNSKFSLLGGLRSAAQMVSYELSMGLAVISVVLIAGSLNFMEIVEHQSSGGALLGWNAVRNPIGCLIFIVTAFAETNRAPFDLPEAEEELVAGYHTEYSGMKFGMFFLAEYVNWFIASFFIVTLFFGGYLVPLEPQLIALFPALEGSTLLALLQFVSLMLKVSFFSFVFIWVRWTFPRFKYNQLMKVGWKYLLPIALANAILIALGVVLFGAVGL.

8 helical membrane passes run 9-29 (ALGA…LVFA), 82-102 (VVMV…EGVV), 108-128 (VGVI…TLAG), 154-174 (MGLA…MEIV), 183-203 (LLGW…VTAF), 241-261 (YVNW…GYLV), 282-302 (LLQF…FIWV), and 325-345 (IALA…AVGL).

It belongs to the complex I subunit 1 family. As to quaternary structure, NDH-1 is composed of 14 different subunits. Subunits NuoA, H, J, K, L, M, N constitute the membrane sector of the complex.

It localises to the cell inner membrane. The catalysed reaction is a quinone + NADH + 5 H(+)(in) = a quinol + NAD(+) + 4 H(+)(out). Its function is as follows. NDH-1 shuttles electrons from NADH, via FMN and iron-sulfur (Fe-S) centers, to quinones in the respiratory chain. The immediate electron acceptor for the enzyme in this species is believed to be ubiquinone. Couples the redox reaction to proton translocation (for every two electrons transferred, four hydrogen ions are translocated across the cytoplasmic membrane), and thus conserves the redox energy in a proton gradient. This subunit may bind ubiquinone. The polypeptide is NADH-quinone oxidoreductase subunit H (Salinibacter ruber (strain DSM 13855 / M31)).